A 495-amino-acid polypeptide reads, in one-letter code: Lysine--tRNA ligase (495 aa).

Mg(2+) is bound by residues E406 and E413.

Belongs to the class-II aminoacyl-tRNA synthetase family. Homodimer. Mg(2+) serves as cofactor.

The protein localises to the cytoplasm. The enzyme catalyses tRNA(Lys) + L-lysine + ATP = L-lysyl-tRNA(Lys) + AMP + diphosphate. The protein is Lysine--tRNA ligase of Staphylococcus aureus (strain MW2).